The primary structure comprises 848 residues: Leucine--tRNA ligase (848 aa).

The 'HIGH' region motif lies at 41–51 (PYPSGRIHMGH). A 'KMSKS' region motif is present at residues 619–623 (KMSKS). Residue Lys-622 participates in ATP binding.

Belongs to the class-I aminoacyl-tRNA synthetase family.

Its subcellular location is the cytoplasm. The enzyme catalyses tRNA(Leu) + L-leucine + ATP = L-leucyl-tRNA(Leu) + AMP + diphosphate. The polypeptide is Leucine--tRNA ligase (Roseobacter denitrificans (strain ATCC 33942 / OCh 114) (Erythrobacter sp. (strain OCh 114))).